Consider the following 241-residue polypeptide: ATP synthase subunit a (241 aa).

Helical transmembrane passes span 30-50 (GQVFMTSWLLIGALLALVVIG), 91-111 (FIGTLFLFIFVSNWGGALVPW), 128-148 (INTTVALALLVSLSYFYAGLS), 193-213 (LVVAVLVFLVPLVLPVPVMFL), and 214-234 (GLFTSAIQALIFATLAAYYIG).

The protein belongs to the ATPase A chain family. F-type ATPases have 2 components, CF(1) - the catalytic core - and CF(0) - the membrane proton channel. CF(1) has five subunits: alpha(3), beta(3), gamma(1), delta(1), epsilon(1). CF(0) has four main subunits: a, b, b' and c.

The protein localises to the cellular thylakoid membrane. Key component of the proton channel; it plays a direct role in the translocation of protons across the membrane. The polypeptide is ATP synthase subunit a (Prochlorococcus marinus (strain NATL1A)).